Reading from the N-terminus, the 222-residue chain is Methylthioribulose-1-phosphate dehydratase (222 aa).

2 residues coordinate Zn(2+): histidine 94 and histidine 96.

The protein belongs to the aldolase class II family. MtnB subfamily. Zn(2+) serves as cofactor.

The catalysed reaction is 5-(methylsulfanyl)-D-ribulose 1-phosphate = 5-methylsulfanyl-2,3-dioxopentyl phosphate + H2O. Its pathway is amino-acid biosynthesis; L-methionine biosynthesis via salvage pathway; L-methionine from S-methyl-5-thio-alpha-D-ribose 1-phosphate: step 2/6. Catalyzes the dehydration of methylthioribulose-1-phosphate (MTRu-1-P) into 2,3-diketo-5-methylthiopentyl-1-phosphate (DK-MTP-1-P). This Yersinia pseudotuberculosis serotype IB (strain PB1/+) protein is Methylthioribulose-1-phosphate dehydratase.